The following is a 264-amino-acid chain: 3-methyl-2-oxobutanoate hydroxymethyltransferase (264 aa).

Residues D45 and D84 each contribute to the Mg(2+) site. 3-methyl-2-oxobutanoate-binding positions include 45-46, D84, and K112; that span reads DS. E114 lines the Mg(2+) pocket. E181 acts as the Proton acceptor in catalysis.

It belongs to the PanB family. Homodecamer; pentamer of dimers. Mg(2+) is required as a cofactor.

It is found in the cytoplasm. It carries out the reaction 3-methyl-2-oxobutanoate + (6R)-5,10-methylene-5,6,7,8-tetrahydrofolate + H2O = 2-dehydropantoate + (6S)-5,6,7,8-tetrahydrofolate. Its pathway is cofactor biosynthesis; (R)-pantothenate biosynthesis; (R)-pantoate from 3-methyl-2-oxobutanoate: step 1/2. In terms of biological role, catalyzes the reversible reaction in which hydroxymethyl group from 5,10-methylenetetrahydrofolate is transferred onto alpha-ketoisovalerate to form ketopantoate. The protein is 3-methyl-2-oxobutanoate hydroxymethyltransferase of Escherichia coli O7:K1 (strain IAI39 / ExPEC).